Here is a 119-residue protein sequence, read N- to C-terminus: Large ribosomal subunit protein uL18 (119 aa).

The interval 1 to 23 (MISKPDKNKTRQRRHARVRGKIS) is disordered. Residues 10 to 20 (TRQRRHARVRG) are compositionally biased toward basic residues.

It belongs to the universal ribosomal protein uL18 family. Part of the 50S ribosomal subunit; part of the 5S rRNA/L5/L18/L25 subcomplex. Contacts the 5S and 23S rRNAs.

Functionally, this is one of the proteins that bind and probably mediate the attachment of the 5S RNA into the large ribosomal subunit, where it forms part of the central protuberance. The protein is Large ribosomal subunit protein uL18 of Lacticaseibacillus casei (strain BL23) (Lactobacillus casei).